A 557-amino-acid polypeptide reads, in one-letter code: Dihydroxy-acid dehydratase (557 aa).

Asp-78 provides a ligand contact to Mg(2+). Cys-119 is a binding site for [2Fe-2S] cluster. Mg(2+) contacts are provided by Asp-120 and Lys-121. N6-carboxylysine is present on Lys-121. Cys-192 is a binding site for [2Fe-2S] cluster. Glu-442 contacts Mg(2+). Ser-468 functions as the Proton acceptor in the catalytic mechanism.

Belongs to the IlvD/Edd family. As to quaternary structure, homodimer. [2Fe-2S] cluster is required as a cofactor. It depends on Mg(2+) as a cofactor.

The enzyme catalyses (2R)-2,3-dihydroxy-3-methylbutanoate = 3-methyl-2-oxobutanoate + H2O. It catalyses the reaction (2R,3R)-2,3-dihydroxy-3-methylpentanoate = (S)-3-methyl-2-oxopentanoate + H2O. The protein operates within amino-acid biosynthesis; L-isoleucine biosynthesis; L-isoleucine from 2-oxobutanoate: step 3/4. It participates in amino-acid biosynthesis; L-valine biosynthesis; L-valine from pyruvate: step 3/4. In terms of biological role, functions in the biosynthesis of branched-chain amino acids. Catalyzes the dehydration of (2R,3R)-2,3-dihydroxy-3-methylpentanoate (2,3-dihydroxy-3-methylvalerate) into 2-oxo-3-methylpentanoate (2-oxo-3-methylvalerate) and of (2R)-2,3-dihydroxy-3-methylbutanoate (2,3-dihydroxyisovalerate) into 2-oxo-3-methylbutanoate (2-oxoisovalerate), the penultimate precursor to L-isoleucine and L-valine, respectively. This is Dihydroxy-acid dehydratase from Bacillus anthracis (strain A0248).